The primary structure comprises 325 residues: Germination protease (325 aa).

A propeptide spanning residues 1-7 (MYNVRTD) is cleaved from the precursor.

It belongs to the peptidase A25 family. In terms of assembly, homotetramer. Post-translationally, autoproteolytically processed. The inactive tetrameric zymogen termed p46 autoprocesses to a smaller form termed p41, which is active only during spore germination.

The enzyme catalyses Endopeptidase action with P4 Glu or Asp, P1 preferably Glu &gt; Asp, P1' hydrophobic and P2' Ala.. In terms of biological role, initiates the rapid degradation of small, acid-soluble proteins during spore germination. In Clostridium perfringens (strain SM101 / Type A), this protein is Germination protease.